A 488-amino-acid chain; its full sequence is Pre-glycoprotein polyprotein GP complex (488 aa).

Gly2 is lipidated: N-myristoyl glycine; by host. At 2–17 the chain is on the extracellular side; that stretch reads GQLFSFFEEVPNIIHE. Residues 18 to 32 traverse the membrane as a helical segment; that stretch reads AINIALIAVSLIAAL. A topological domain (cytoplasmic) is located at residue Lys33. The chain crosses the membrane as a helical span at residues 34–53; it reads GMINLWKSGLFQLIFFLTLA. Extracellular segments follow at residues 54-58 and 59-427; these read GRSCS and FRIG…TLVD. Cys57 contributes to the Zn(2+) binding site. N-linked (GlcNAc...) asparagine; by host glycosylation is found at Asn69, Asn88, Asn99, Asn125, Asn171, Asn178, and Asn222. 4 disulfides stabilise this stretch: Cys85–Cys229, Cys274–Cys287, Cys296–Cys305, and Cys359–Cys380. Residues Asn360, Asn368, Asn385, and Asn390 are each glycosylated (N-linked (GlcNAc...) asparagine; by host). Residues 428–448 traverse the membrane as a helical segment; that stretch reads ICFWSTLFFTTTLFLHLVGFP. Residues 449–488 are Cytoplasmic-facing; sequence THRHIRGEPCPLPHRLNSRGGCRCGKYPELKKPITWHKNH. His450, His452, Cys458, His462, Cys470, Cys472, and His488 together coordinate Zn(2+).

This sequence belongs to the arenaviridae GPC protein family. As to quaternary structure, homotetramer; disulfide-linked. In terms of assembly, homotetramer. GP2 homotetramers bind through ionic interactions with GP1 homotetramers to form the GP complex together with the stable signal peptide. The GP-C polyprotein interacts with the host protease MBTPS1/SKI-1 resulting in the polyprotein processing. Specific enzymatic cleavages in vivo yield mature proteins. GP-C polyprotein is cleaved in the endoplasmic reticulum by the host protease MBTPS1. Only cleaved glycoprotein is incorporated into virions. In terms of processing, the SSP remains stably associated with the GP complex following cleavage by signal peptidase and plays crucial roles in the trafficking of GP through the secretory pathway. Post-translationally, myristoylation is necessary for GP2-mediated fusion activity.

The protein localises to the virion membrane. The protein resides in the host endoplasmic reticulum membrane. Its subcellular location is the host Golgi apparatus membrane. It is found in the host cell membrane. In terms of biological role, interacts with the host receptor. Mediates virus attachment to host TFRC. This attachment induces virion internalization predominantly through clathrin-mediated endocytosis. Its function is as follows. Class I viral fusion protein that directs fusion of viral and host endosomal membranes, leading to delivery of the nucleocapsid into the cytoplasm. Membrane fusion is mediated by irreversible conformational changes induced upon acidification in the endosome. Functionally, stable signal peptide (SSP): cleaved and functions as a signal peptide. In addition, it is also retained as the third component of the GP complex. The SSP is required for efficient glycoprotein expression, post-translational maturation cleavage of GP1 and GP2, glycoprotein transport to the cell surface plasma membrane, formation of infectious virus particles, and acid pH-dependent glycoprotein-mediated cell fusion. The chain is Pre-glycoprotein polyprotein GP complex from Homo sapiens (Human).